A 603-amino-acid polypeptide reads, in one-letter code: Elongation factor 4 (603 aa).

Positions 7 to 189 (SRIRNFSIIA…SIVHLVPPPQ (183 aa)) constitute a tr-type G domain. GTP contacts are provided by residues 19–24 (DHGKST) and 136–139 (NKID).

It belongs to the TRAFAC class translation factor GTPase superfamily. Classic translation factor GTPase family. LepA subfamily.

It localises to the cell inner membrane. It carries out the reaction GTP + H2O = GDP + phosphate + H(+). Functionally, required for accurate and efficient protein synthesis under certain stress conditions. May act as a fidelity factor of the translation reaction, by catalyzing a one-codon backward translocation of tRNAs on improperly translocated ribosomes. Back-translocation proceeds from a post-translocation (POST) complex to a pre-translocation (PRE) complex, thus giving elongation factor G a second chance to translocate the tRNAs correctly. Binds to ribosomes in a GTP-dependent manner. The chain is Elongation factor 4 from Rippkaea orientalis (strain PCC 8801 / RF-1) (Cyanothece sp. (strain PCC 8801)).